Here is a 391-residue protein sequence, read N- to C-terminus: Pyruvate dehydrogenase E1 component subunit alpha, mitochondrial (391 aa).

The transit peptide at 1 to 26 directs the protein to the mitochondrion; that stretch reads MALSTSRAINHIMKPLSAAVCATRRL. The pyruvate site is built by histidine 92, tyrosine 118, arginine 119, glycine 167, valine 169, aspartate 198, glycine 199, alanine 200, asparagine 227, and tyrosine 229. Thiamine diphosphate is bound by residues tyrosine 118, arginine 119, glycine 167, valine 169, aspartate 198, glycine 199, alanine 200, and asparagine 227. Aspartate 198 is a binding site for Mg(2+). Mg(2+) is bound by residues asparagine 227 and tyrosine 229. Histidine 293 is a thiamine diphosphate binding site. Residues 294–313 form a disordered region; the sequence is SMSDPGSTYRTRDEISGVRQ. A compositionally biased stretch (basic and acidic residues) spans 303-313; it reads RTRDEISGVRQ.

In terms of assembly, tetramer of 2 alpha and 2 beta subunits. Thiamine diphosphate serves as cofactor. Mg(2+) is required as a cofactor.

The protein resides in the mitochondrion matrix. It carries out the reaction N(6)-[(R)-lipoyl]-L-lysyl-[protein] + pyruvate + H(+) = N(6)-[(R)-S(8)-acetyldihydrolipoyl]-L-lysyl-[protein] + CO2. With respect to regulation, E1 activity is regulated by phosphorylation (inactivation) and dephosphorylation (activation) of the alpha subunit. Functionally, the pyruvate dehydrogenase complex catalyzes the overall conversion of pyruvate to acetyl-CoA and CO(2). It contains multiple copies of three enzymatic components: pyruvate dehydrogenase (E1), dihydrolipoamide acetyltransferase (E2) and lipoamide dehydrogenase (E3). The chain is Pyruvate dehydrogenase E1 component subunit alpha, mitochondrial from Solanum tuberosum (Potato).